The primary structure comprises 628 residues: DNA-directed RNA polymerase III subunit RPC3 (628 aa).

A compositionally biased stretch (acidic residues) spans 360–383; the sequence is EVDGEASADEDEGEDESSEESDYD. The segment at 360–422 is disordered; sequence EVDGEASADE…SAAPKERRMD (63 aa). Positions 390 to 406 are enriched in low complexity; that stretch reads TTHGTNGVNGTNGTNGT. The span at 408-422 shows a compositional bias: basic and acidic residues; it reads VKFDESAAPKERRMD. A leucine-zipper region spans residues 555-576; that stretch reads GYVTMVHCLQVLEALRRKERDV.

The protein belongs to the RNA polymerase beta chain family. In terms of assembly, component of the RNA polymerase III (Pol III) complex consisting of 17 subunits.

It localises to the nucleus. DNA-dependent RNA polymerase catalyzes the transcription of DNA into RNA using the four ribonucleoside triphosphates as substrates. Specific core component of RNA polymerase III which synthesizes small RNAs, such as 5S rRNA and tRNAs. The protein is DNA-directed RNA polymerase III subunit RPC3 (RPC82) of Chaetomium globosum (strain ATCC 6205 / CBS 148.51 / DSM 1962 / NBRC 6347 / NRRL 1970) (Soil fungus).